The sequence spans 172 residues: Trypsin inhibitor 1B (172 aa).

2 disulfides stabilise this stretch: Cys-40–Cys-84 and Cys-133–Cys-139.

The protein belongs to the protease inhibitor I3 (leguminous Kunitz-type inhibitor) family.

In terms of biological role, WTI-1B inhibits trypsin stoichiometrically. The sequence is that of Trypsin inhibitor 1B from Psophocarpus tetragonolobus (Winged bean).